Reading from the N-terminus, the 483-residue chain is Probable glycine dehydrogenase (decarboxylating) subunit 2 (483 aa).

The segment at 1–24 (MLIFDHSRPGRTAAAQLPATGGDL) is disordered. N6-(pyridoxal phosphate)lysine is present on lysine 264.

This sequence belongs to the GcvP family. C-terminal subunit subfamily. The glycine cleavage system is composed of four proteins: P, T, L and H. In this organism, the P 'protein' is a heterodimer of two subunits. Requires pyridoxal 5'-phosphate as cofactor.

It catalyses the reaction N(6)-[(R)-lipoyl]-L-lysyl-[glycine-cleavage complex H protein] + glycine + H(+) = N(6)-[(R)-S(8)-aminomethyldihydrolipoyl]-L-lysyl-[glycine-cleavage complex H protein] + CO2. Functionally, the glycine cleavage system catalyzes the degradation of glycine. The P protein binds the alpha-amino group of glycine through its pyridoxal phosphate cofactor; CO(2) is released and the remaining methylamine moiety is then transferred to the lipoamide cofactor of the H protein. The polypeptide is Probable glycine dehydrogenase (decarboxylating) subunit 2 (Thiobacillus denitrificans (strain ATCC 25259 / T1)).